A 401-amino-acid polypeptide reads, in one-letter code: Probable aspartate/prephenate aminotransferase (401 aa).

Glycine 39, tryptophan 125, and asparagine 175 together coordinate L-aspartate. Residue lysine 239 is modified to N6-(pyridoxal phosphate)lysine. Arginine 375 is a binding site for L-aspartate.

It belongs to the class-I pyridoxal-phosphate-dependent aminotransferase family. As to quaternary structure, homodimer. Pyridoxal 5'-phosphate serves as cofactor.

The protein localises to the cytoplasm. It carries out the reaction L-aspartate + 2-oxoglutarate = oxaloacetate + L-glutamate. It catalyses the reaction L-arogenate + 2-oxoglutarate = prephenate + L-glutamate. Its function is as follows. Catalyzes the reversible conversion of aspartate and 2-oxoglutarate to glutamate and oxaloacetate. Can also transaminate prephenate in the presence of glutamate. The polypeptide is Probable aspartate/prephenate aminotransferase (aatA) (Rickettsia conorii (strain ATCC VR-613 / Malish 7)).